A 451-amino-acid chain; its full sequence is Phosphoglucosamine mutase (451 aa).

Residue S107 is the Phosphoserine intermediate of the active site. Residues S107, D246, D248, and D250 each contribute to the Mg(2+) site. A Phosphoserine modification is found at S107.

It belongs to the phosphohexose mutase family. The cofactor is Mg(2+). In terms of processing, activated by phosphorylation.

It catalyses the reaction alpha-D-glucosamine 1-phosphate = D-glucosamine 6-phosphate. Catalyzes the conversion of glucosamine-6-phosphate to glucosamine-1-phosphate. This Burkholderia cenocepacia (strain ATCC BAA-245 / DSM 16553 / LMG 16656 / NCTC 13227 / J2315 / CF5610) (Burkholderia cepacia (strain J2315)) protein is Phosphoglucosamine mutase.